We begin with the raw amino-acid sequence, 932 residues long: Protocadherin gamma-A9 (932 aa).

The N-terminal stretch at 1–28 (MAAPTKCQLRGRLVLLCSLLGMLWEARA) is a signal peptide. 6 Cadherin domains span residues 29–133 (SQIR…APKF), 134–242 (QAES…APVF), 243–347 (AQRI…RPEV), 348–452 (TITS…PPAF), 453–562 (SQAS…APEI), and 570–683 (DGST…IPAD). Topologically, residues 29-692 (SQIRYSVPEE…DLEASDLTLY (664 aa)) are extracellular. 2 N-linked (GlcNAc...) asparagine glycosylation sites follow: Asn-47 and Asn-127. Asn-389, Asn-419, and Asn-545 each carry an N-linked (GlcNAc...) asparagine glycan. Residues 693-713 (LVVAVAVVSCVFLTFVITLLA) form a helical membrane-spanning segment. Residues 714–932 (LRLRHWHSSH…KKKSGKKEKK (219 aa)) are Cytoplasmic-facing. 2 disordered regions span residues 803 to 841 (DTPLVPQAPPNTDWRFSQAQRPGTSGSQNGDDTGTWPNN) and 902 to 932 (ATLTNAAGKRDGKAPAGGNGNKKKSGKKEKK). Over residues 816 to 841 (WRFSQAQRPGTSGSQNGDDTGTWPNN) the composition is skewed to polar residues. Basic residues predominate over residues 922–932 (NKKKSGKKEKK).

It localises to the cell membrane. Potential calcium-dependent cell-adhesion protein. May be involved in the establishment and maintenance of specific neuronal connections in the brain. This is Protocadherin gamma-A9 (PCDHGA9) from Pan troglodytes (Chimpanzee).